A 388-amino-acid polypeptide reads, in one-letter code: Oligogalacturonide lyase (388 aa).

It localises to the periplasm. It catalyses the reaction 4-(4-deoxy-alpha-D-galact-4-enuronosyl)-D-galacturonate = 2 5-dehydro-4-deoxy-D-glucuronate. It participates in glycan metabolism; pectin degradation; 2-dehydro-3-deoxy-D-gluconate from pectin: step 3/5. Functionally, involved in degradation of pectin, which causes soft-rod disease in plants. In Pectobacterium atrosepticum (strain SCRI 1043 / ATCC BAA-672) (Erwinia carotovora subsp. atroseptica), this protein is Oligogalacturonide lyase (ogl).